We begin with the raw amino-acid sequence, 393 residues long: Protein Njmu-R1 (393 aa).

Residues 1-74 (MLPSLQESLD…AETPSGDDFS (74 aa)) are disordered. 2 positions are modified to phosphoserine: serine 8 and serine 18. The span at 9 to 24 (LDGDEKELESSEEGGS) shows a compositional bias: acidic residues.

As to quaternary structure, interacts with TBC1D23; this interaction may be indirect.

Functionally, may have a role in spermatogenesis. The chain is Protein Njmu-R1 from Mus musculus (Mouse).